Here is a 262-residue protein sequence, read N- to C-terminus: ATP synthase subunit a (262 aa).

5 helical membrane-spanning segments follow: residues 25–45 (NVHIDTLFFSVLAAIIFLAVF), 86–106 (VAPLALTIFCWVFIMNAIDLI), 130–150 (DISATLGMSLCVFALILFYTV), 204–226 (LIFILIAVMYSANAAIAALGIPL), and 240–260 (LQAFIFMMLTVVYLSIAYNKA).

The protein belongs to the ATPase A chain family. As to quaternary structure, F-type ATPases have 2 components, CF(1) - the catalytic core - and CF(0) - the membrane proton channel. CF(1) has five subunits: alpha(3), beta(3), gamma(1), delta(1), epsilon(1). CF(0) has three main subunits: a(1), b(2) and c(9-12). The alpha and beta chains form an alternating ring which encloses part of the gamma chain. CF(1) is attached to CF(0) by a central stalk formed by the gamma and epsilon chains, while a peripheral stalk is formed by the delta and b chains.

It is found in the cell inner membrane. Key component of the proton channel; it plays a direct role in the translocation of protons across the membrane. The sequence is that of ATP synthase subunit a from Mannheimia succiniciproducens (strain KCTC 0769BP / MBEL55E).